A 316-amino-acid polypeptide reads, in one-letter code: Probable cell division protein WhiA (316 aa).

The H-T-H motif DNA-binding region spans 275-309; that stretch reads TLKELGEMVSGGKISKSGINHRLRKIDEIAEKLRA.

It belongs to the WhiA family.

Functionally, involved in cell division and chromosome segregation. The polypeptide is Probable cell division protein WhiA (Bacillus cytotoxicus (strain DSM 22905 / CIP 110041 / 391-98 / NVH 391-98)).